We begin with the raw amino-acid sequence, 421 residues long: Glucan 1,3-beta-glucosidase (421 aa).

Positions 1-15 (MKLTKLVALAGAALA) are cleaved as a signal peptide. Glutamate 213 functions as the Proton donor in the catalytic mechanism. 2 disulfides stabilise this stretch: cysteine 296/cysteine 419 and cysteine 321/cysteine 347. Glutamate 313 acts as the Nucleophile in catalysis.

Belongs to the glycosyl hydrolase 5 (cellulase A) family.

Its subcellular location is the secreted. The catalysed reaction is Successive hydrolysis of beta-D-glucose units from the non-reducing ends of (1-&gt;3)-beta-D-glucans, releasing alpha-glucose.. The polypeptide is Glucan 1,3-beta-glucosidase (EXG1) (Yarrowia lipolytica (strain CLIB 122 / E 150) (Yeast)).